We begin with the raw amino-acid sequence, 297 residues long: N-acetylmuramic acid 6-phosphate etherase (297 aa).

An SIS domain is found at 55–218 (AAAALTRGGR…STGAMVKCGK (164 aa)). Residue Glu83 is the Proton donor of the active site. Glu114 is a catalytic residue.

It belongs to the GCKR-like family. MurNAc-6-P etherase subfamily. In terms of assembly, homodimer.

It catalyses the reaction N-acetyl-D-muramate 6-phosphate + H2O = N-acetyl-D-glucosamine 6-phosphate + (R)-lactate. The protein operates within amino-sugar metabolism; 1,6-anhydro-N-acetylmuramate degradation. It functions in the pathway amino-sugar metabolism; N-acetylmuramate degradation. It participates in cell wall biogenesis; peptidoglycan recycling. Functionally, specifically catalyzes the cleavage of the D-lactyl ether substituent of MurNAc 6-phosphate, producing GlcNAc 6-phosphate and D-lactate. Together with AnmK, is also required for the utilization of anhydro-N-acetylmuramic acid (anhMurNAc) either imported from the medium or derived from its own cell wall murein, and thus plays a role in cell wall recycling. The chain is N-acetylmuramic acid 6-phosphate etherase from Cronobacter sakazakii (strain ATCC BAA-894) (Enterobacter sakazakii).